A 993-amino-acid polypeptide reads, in one-letter code: MATSSFNINELVASHGDKGLLATALVDKTTHEQLEEQLQHQRRGRKVYIRNVLGVKDSEVIRNRYGGKYDLHLTQQEFASQGLAGALRLCGTLDCLDSFPSSGLRQDLVLDFGGSWVTHYLRGHNVHCCSPCLGIRDKMRHSERLMNMRKIILNDPQQFDGRQPDFCTQPAADCKVQAHFAISIHGGYDMGFRGLCEAMNAHGTTILKGTMMFDGAMMFDDQGVIPELNCQWRKIRSAFSETEDVTPLVGKLNSTVFSRVRKFKTMVAFDFINESTMSYVHDWENIKSFLTDQTYSYRGMTYGIERCVIHAGIMTYKIIGVPGMCPPELIRHCIWFPSIKDYVGLKIPASQDLVEWKTVRILTSTLRETEEIAMRCYNDKKAWMEQFKVILGVLSAKSSTIVINGMSMQSGERIDINDYHYIGFAILLHTKMKYEQLGKMYDMWNASSISKWFAALTRPLRVFFSSVVHALFPTLRPREEKEFLIKLSTFVTFNEECSFDGGEEWDVISSAAYVATQAVTDGKILAAQKAEKLAEKLAQPVSEVSDSPETSSQTPDDTADVCGKEREVSELDSLSAQTRSPITRVAERATAMLEYAAYEKHLHDTTVSNLKRIWNMAGGDDKRSFLEGNLKFVFDSYFTVDPMVNIHFSTGRWVRPVPEGIVYPVGYNERGLGPKSDGELYIVNSECVICNSESLSTVYGRSLQTPTGTISQVDGVAGCGKTMPIKSIFEPSTDMIVTANKKSAQDVRMALFKSSDSKEACTFVRTADSVLLNECPTVSRVLEDEVVLLHFGQLCAVMSKLKAVRAICFGDAEQIAFSSRDASFDMRFSKIIPDETSDADTTFRSPQDVVPLVRLMATKALPKGTHSKYTKWVSQSKVRRSVTSRAIASVTLVDLDSSRFYITMTQADKASLISRAKEMNLPKTFWNERIKTVHESQGISEDHVTLVRLKSTKCDLFKQFSYCLVALTRHKVTFRYEYCGVLNGDLIASVARA.

The segment at 51 to 409 is methyltransferase; that stretch reads NVLGVKDSEV…TIVINGMSMQ (359 aa). The 219-residue stretch at 72–290 folds into the Alphavirus-like MT domain; that stretch reads HLTQQEFASQ…HDWENIKSFL (219 aa). The segment at 538-561 is disordered; the sequence is AQPVSEVSDSPETSSQTPDDTADV. Positions 542–556 are enriched in polar residues; that stretch reads SEVSDSPETSSQTPD. A (+)RNA virus helicase ATP-binding domain is found at 683–839; it reads VNSECVICNS…KIIPDETSDA (157 aa). Residues 713–976 are ATP-dependent helicase; the sequence is VDGVAGCGKT…LTRHKVTFRY (264 aa). 715–722 is an ATP binding site; it reads GVAGCGKT. The (+)RNA virus helicase C-terminal domain occupies 840–993; that stretch reads DTTFRSPQDV…GDLIASVARA (154 aa).

Belongs to the bromoviridae replication protein 1a family. In terms of assembly, interacts with RNA-directed RNA polymerase 2a. Interacts with Arabidopsis TIP1-1, TIP1-2, TIP1-3, TIP2-1, TIP2-2 and TIP2-3.

The protein resides in the host endoplasmic reticulum membrane. Functionally, involved in the virus replication. Contains a helicase domain and a methyltransferase domain. The methyltransferase domain is probably involved in viral RNA capping. Involved in the formation of ER membrane spherular invaginations in which RNA replication complexes form. The chain is Replication protein 1a from Cucumis sativus (Cucumber).